The following is a 255-amino-acid chain: Small ribosomal subunit protein eS1 (255 aa).

Residue A2 is modified to N-acetylalanine; partial.

It belongs to the eukaryotic ribosomal protein eS1 family. In terms of assembly, component of the small ribosomal subunit. Mature ribosomes consist of a small (40S) and a large (60S) subunit. The 40S subunit contains about 33 different proteins and 1 molecule of RNA (18S). The 60S subunit contains about 49 different proteins and 3 molecules of RNA (25S, 5.8S and 5S).

It localises to the cytoplasm. The protein is Small ribosomal subunit protein eS1 of Candida glabrata (strain ATCC 2001 / BCRC 20586 / JCM 3761 / NBRC 0622 / NRRL Y-65 / CBS 138) (Yeast).